Here is a 107-residue protein sequence, read N- to C-terminus: Thiosulfate sulfurtransferase GlpE (107 aa).

The Rhodanese domain maps to 19–107 (KDHNARMVDI…WNKAGLPVEK (89 aa)). C67 serves as the catalytic Cysteine persulfide intermediate.

The protein belongs to the GlpE family.

Its subcellular location is the cytoplasm. It carries out the reaction thiosulfate + hydrogen cyanide = thiocyanate + sulfite + 2 H(+). It catalyses the reaction thiosulfate + [thioredoxin]-dithiol = [thioredoxin]-disulfide + hydrogen sulfide + sulfite + 2 H(+). Transferase that catalyzes the transfer of sulfur from thiosulfate to thiophilic acceptors such as cyanide or dithiols. May function in a CysM-independent thiosulfate assimilation pathway by catalyzing the conversion of thiosulfate to sulfite, which can then be used for L-cysteine biosynthesis. This is Thiosulfate sulfurtransferase GlpE from Aliivibrio salmonicida (strain LFI1238) (Vibrio salmonicida (strain LFI1238)).